Consider the following 430-residue polypeptide: Glucose-6-phosphate isomerase (430 aa).

Glu-284 serves as the catalytic Proton donor. Active-site residues include His-305 and Lys-420.

It belongs to the GPI family.

The protein resides in the cytoplasm. The catalysed reaction is alpha-D-glucose 6-phosphate = beta-D-fructose 6-phosphate. It participates in carbohydrate biosynthesis; gluconeogenesis. Its pathway is carbohydrate degradation; glycolysis; D-glyceraldehyde 3-phosphate and glycerone phosphate from D-glucose: step 2/4. Its function is as follows. Catalyzes the reversible isomerization of glucose-6-phosphate to fructose-6-phosphate. This chain is Glucose-6-phosphate isomerase, found in Mycoplasmopsis synoviae (strain 53) (Mycoplasma synoviae).